Consider the following 245-residue polypeptide: Ribonuclease 3 (245 aa).

The RNase III domain occupies 19–148; that stretch reads FKVFQEKIGI…FIGALYLDQG (130 aa). Residue glutamate 61 participates in Mg(2+) binding. Residue aspartate 65 is part of the active site. The Mg(2+) site is built by aspartate 134 and glutamate 137. The active site involves glutamate 137. A DRBM domain is found at 174 to 243; it reads DYKSQLQELI…AAEALKKLKE (70 aa).

The protein belongs to the ribonuclease III family. Homodimer. Mg(2+) serves as cofactor.

It localises to the cytoplasm. It catalyses the reaction Endonucleolytic cleavage to 5'-phosphomonoester.. In terms of biological role, digests double-stranded RNA. Involved in the processing of primary rRNA transcript to yield the immediate precursors to the large and small rRNAs (23S and 16S). Processes some mRNAs, and tRNAs when they are encoded in the rRNA operon. Processes pre-crRNA and tracrRNA of type II CRISPR loci if present in the organism. This Bacillus cereus (strain ZK / E33L) protein is Ribonuclease 3.